The primary structure comprises 607 residues: UvrABC system protein C (607 aa).

The GIY-YIG domain occupies 12–91; sequence DSPGVYLYKD…IKRYRPRYNI (80 aa). Residues 200-235 form the UVR domain; it reads ENLIKKLKKEMAIASDNLEFERAAKLRDQILALEKI.

The protein belongs to the UvrC family. Interacts with UvrB in an incision complex.

The protein localises to the cytoplasm. In terms of biological role, the UvrABC repair system catalyzes the recognition and processing of DNA lesions. UvrC both incises the 5' and 3' sides of the lesion. The N-terminal half is responsible for the 3' incision and the C-terminal half is responsible for the 5' incision. This is UvrABC system protein C from Carboxydothermus hydrogenoformans (strain ATCC BAA-161 / DSM 6008 / Z-2901).